We begin with the raw amino-acid sequence, 299 residues long: MTESNRLRIAIQKSGRLSTDSQQLLKSCGVKFSINEQSLIAHADNMPIDLLRVRDDDIPGLVMDGVVDLGIIGENVLEEEQIERQTLNKPAEFVKLRQLDFGACRLSLAVPTEFSYADASSLEGLRIATSYPNLLRRFMQQKGISYRDCMLKGSVEVAPRAGLADGICDLVSTGATLEANGLYETEVIYRSMACVIQSTQTQTPSKQALIDRILSRVNGVIRARESKYILLHAPTETLDQIVALLPGAENPTVLPLNDDTNRVAIHAVSTEDLFWDTMEQLTALGASSILVMPIEKMMG.

The protein belongs to the ATP phosphoribosyltransferase family. Long subfamily. Mg(2+) is required as a cofactor.

It localises to the cytoplasm. It carries out the reaction 1-(5-phospho-beta-D-ribosyl)-ATP + diphosphate = 5-phospho-alpha-D-ribose 1-diphosphate + ATP. The protein operates within amino-acid biosynthesis; L-histidine biosynthesis; L-histidine from 5-phospho-alpha-D-ribose 1-diphosphate: step 1/9. With respect to regulation, feedback inhibited by histidine. Its function is as follows. Catalyzes the condensation of ATP and 5-phosphoribose 1-diphosphate to form N'-(5'-phosphoribosyl)-ATP (PR-ATP). Has a crucial role in the pathway because the rate of histidine biosynthesis seems to be controlled primarily by regulation of HisG enzymatic activity. The polypeptide is ATP phosphoribosyltransferase (Shewanella sp. (strain MR-7)).